A 125-amino-acid polypeptide reads, in one-letter code: Ribonuclease VapC19 (125 aa).

The region spanning 3–122 (LIDTTIAVDH…RHFPMFPDLQ (120 aa)) is the PINc domain. Mg(2+) contacts are provided by aspartate 5 and aspartate 93.

This sequence belongs to the PINc/VapC protein family. The cofactor is Mg(2+).

Toxic component of a type II toxin-antitoxin (TA) system. An RNase. Its toxic effect is neutralized by coexpression with cognate antitoxin VapB19. This Mycobacterium tuberculosis (strain CDC 1551 / Oshkosh) protein is Ribonuclease VapC19.